A 279-amino-acid polypeptide reads, in one-letter code: Acetylglutamate kinase (279 aa).

Substrate contacts are provided by residues 64–65 (GG), R86, and N177.

Belongs to the acetylglutamate kinase family. ArgB subfamily.

The protein resides in the cytoplasm. It carries out the reaction N-acetyl-L-glutamate + ATP = N-acetyl-L-glutamyl 5-phosphate + ADP. It functions in the pathway amino-acid biosynthesis; L-arginine biosynthesis; N(2)-acetyl-L-ornithine from L-glutamate: step 2/4. In terms of biological role, catalyzes the ATP-dependent phosphorylation of N-acetyl-L-glutamate. The protein is Acetylglutamate kinase of Campylobacter jejuni subsp. jejuni serotype O:23/36 (strain 81-176).